The following is an 86-amino-acid chain: Short neurotoxin homolog NTL4 (86 aa).

Positions 1 to 21 (MKTLLLTLVVVTIICLDLGYT) are cleaved as a signal peptide. 4 disulfides stabilise this stretch: cysteine 24–cysteine 45, cysteine 38–cysteine 63, cysteine 67–cysteine 78, and cysteine 79–cysteine 84.

Belongs to the three-finger toxin family. Short-chain subfamily. Orphan group III sub-subfamily. In terms of tissue distribution, expressed by the venom gland.

It localises to the secreted. The chain is Short neurotoxin homolog NTL4 from Bungarus multicinctus (Many-banded krait).